The sequence spans 119 residues: Aspartate 1-decarboxylase (119 aa).

S25 (schiff-base intermediate with substrate; via pyruvic acid) is an active-site residue. Position 25 is a pyruvic acid (Ser) (S25). Residue T57 participates in substrate binding. Y58 functions as the Proton donor in the catalytic mechanism. Substrate is bound at residue 73–75 (GAA).

Belongs to the PanD family. Heterooctamer of four alpha and four beta subunits. Requires pyruvate as cofactor. Is synthesized initially as an inactive proenzyme, which is activated by self-cleavage at a specific serine bond to produce a beta-subunit with a hydroxyl group at its C-terminus and an alpha-subunit with a pyruvoyl group at its N-terminus.

Its subcellular location is the cytoplasm. It carries out the reaction L-aspartate + H(+) = beta-alanine + CO2. It participates in cofactor biosynthesis; (R)-pantothenate biosynthesis; beta-alanine from L-aspartate: step 1/1. Catalyzes the pyruvoyl-dependent decarboxylation of aspartate to produce beta-alanine. The polypeptide is Aspartate 1-decarboxylase (Desulfotalea psychrophila (strain LSv54 / DSM 12343)).